A 506-amino-acid polypeptide reads, in one-letter code: Cobyric acid synthase (506 aa).

The GATase cobBQ-type domain maps to 251–448 (DITIAIVQLP…LHGLFDSDAF (198 aa)). The active-site Nucleophile is the cysteine 332. Residue histidine 440 is part of the active site.

The protein belongs to the CobB/CobQ family. CobQ subfamily.

Its pathway is cofactor biosynthesis; adenosylcobalamin biosynthesis. Its function is as follows. Catalyzes amidations at positions B, D, E, and G on adenosylcobyrinic A,C-diamide. NH(2) groups are provided by glutamine, and one molecule of ATP is hydrogenolyzed for each amidation. This Salmonella dublin (strain CT_02021853) protein is Cobyric acid synthase.